The primary structure comprises 1271 residues: Clustered mitochondria protein homolog (1271 aa).

2 TPR repeats span residues 104–138 and 502–535; these read RHKP…ELGE and CYGL…KPHK. The region spanning 329-580 is the Clu domain; that stretch reads DQSRPQLSIL…RSTPLDIDFI (252 aa). Basic and acidic residues predominate over residues 729 to 763; that stretch reads QEEKSKIEDNEKAIEEEKKEEKTEKKEEKEEKADE. The tract at residues 729–783 is disordered; that stretch reads QEEKSKIEDNEKAIEEEKKEEKTEKKEEKEEKADEEKSENEEDKTKPEEPSKGVF. TPR repeat units follow at residues 1067–1100, 1109–1142, and 1151–1184; these read ISSY…WDFV, VTTL…SEKI, and AMIH…FSRH. Residues 1212 to 1271 are disordered; the sequence is QAKDKNKPKKVKAPPVPPQATTKKSKNKSKMAQTQISKLHLNSSTRFSSSSRVKPRLKKK. The segment covering 1241 to 1253 has biased composition (polar residues); the sequence is KMAQTQISKLHLN. A compositionally biased stretch (low complexity) spans 1254-1263; the sequence is SSTRFSSSSR.

Belongs to the CLU family. May associate with the eukaryotic translation initiation factor 3 (eIF-3) complex.

It is found in the cytoplasm. Its function is as follows. mRNA-binding protein involved in proper cytoplasmic distribution of mitochondria. The sequence is that of Clustered mitochondria protein homolog from Meyerozyma guilliermondii (strain ATCC 6260 / CBS 566 / DSM 6381 / JCM 1539 / NBRC 10279 / NRRL Y-324) (Yeast).